The following is a 588-amino-acid chain: Probable fumarate reductase Ifc3 (588 aa).

A signal peptide spans 1-22 (MKLKYLVSAMALVVLSSGTAMA). Residues H31, C37, C40, H41, C58, C61, H62, H78, H81, C87, C90, H91, G93, H94, C101, C104, and H105 each contribute to the heme c site. The flavoprotein-like stretch occupies residues 135–588 (AIAAGPSETT…DNAAKHALDK (454 aa)). Residues A154, D173, N181, S182, G187, and G188 each contribute to the FAD site. Residue G187 coordinates fumarate. Position 187 (G187) interacts with succinate. Residue R218 participates in heme c binding. V295 and D361 together coordinate FAD. The succinate site is built by H382, S394, and E395. Positions 394 and 395 each coordinate fumarate. Residue R419 is the Proton donor of the active site. H521 lines the fumarate pocket. Position 521 (H521) interacts with succinate. Residue E551 coordinates FAD. 2 residues coordinate fumarate: R561 and G564. 2 residues coordinate succinate: R561 and G564. Residues G564, A566, and I567 each contribute to the FAD site.

Homodimer. It depends on FAD as a cofactor. The cofactor is heme c.

Its subcellular location is the periplasm. Functionally, flavocytochrome that catalyzes the reduction of fumarate to succinate in vitro. Is essentially unidirectional, catalyzing only fumarate reduction. In vitro, can use the artificial electron donor methyl viologen. May be involved in an alternative route for electron transport to Fe(3+). The chain is Probable fumarate reductase Ifc3 from Shewanella frigidimarina (strain NCIMB 400).